The chain runs to 161 residues: MASCVCVVRSEQWPLMTFDTTMSDKVKKINEHIRSQTKVSVQDQILLLDSKILKPHRALSSYGIDKENTIHLTLKVVKPSDEELPLSLVESGDEGQRHLLRVRRSSSVAQVKEMIENVTAVPPKKQIVNCNGKRLEDGKIMADYNIKSGSLLFLTAHCIGG.

Ubiquitin-like domains follow at residues 3–77 and 86–159; these read SCVC…LKVV and LSLV…AHCI.

Belongs to the ubiquitin D family. Interacts directly with the 26S proteasome. Interacts with NUB1; this interaction facilitates the linking of UBD-conjugated target protein to the proteasome complex and accelerates its own degradation and that of its conjugates. Interacts (via ubiquitin-like 1 domain) with the spindle checkpoint protein MAD2L1 during mitosis. Present in aggresomes of proteasome inhibited cells. Interacts with HDAC6 under proteasome impairment conditions. Forms a thioester with UBA6 in cells stimulated with tumor necrosis factor-alpha (TNFa) and interferon-gamma (IFNg). Interacts with SQSTM1 and TP53/p53. Post-translationally, can be acetylated.

Its subcellular location is the nucleus. It localises to the cytoplasm. Ubiquitin-like protein modifier which can be covalently attached to target proteins and subsequently leads to their degradation by the 26S proteasome, in a NUB1-dependent manner. Conjugation to the target protein is activated by UBA6 via adenylation of its C-terminal glycine. Probably functions as a survival factor. Promotes the expression of the proteasome subunit beta type-9 (PSMB9/LMP2). Regulates TNF-alpha-induced and LPS-mediated activation of the central mediator of innate immunity NF-kappa-B by promoting TNF-alpha-mediated proteasomal degradation of ubiquitinated-I-kappa-B-alpha. Required for TNF-alpha-induced p65 nuclear translocation in renal tubular epithelial cells (RTECs). May be involved in dendritic cell (DC) maturation, the process by which immature dendritic cells differentiate into fully competent antigen-presenting cells that initiate T-cell responses. Mediates mitotic non-disjunction and chromosome instability, in long-term in vitro culture and cancers, by abbreviating mitotic phase and impairing the kinetochore localization of MAD2L1 during the prometaphase stage of the cell cycle. May be involved in the formation of aggresomes when proteasome is saturated or impaired. Mediates apoptosis in a caspase-dependent manner, especially in renal epithelium and tubular cells during renal diseases. This chain is Ubiquitin D (Ubd), found in Rattus norvegicus (Rat).